Reading from the N-terminus, the 570-residue chain is BRICHOS domain-containing protein C09F5.1 (570 aa).

Residues 1-288 are Cytoplasmic-facing; it reads MVVEQIEVIE…YTPELLRSLC (288 aa). Composition is skewed to polar residues over residues 93 to 107 and 228 to 246; these read SGATNSSFLNTSGDS and TSTLNSRRFPPQSQTSLVS. Disordered stretches follow at residues 93-116 and 218-248; these read SGATNSSFLNTSGDSRVSYPGADR and SSWDGDEKKMTSTLNSRRFPPQSQTSLVSRE. Residues 289–309 traverse the membrane as a helical segment; it reads CILLLLLLLLFLMFIIFNAIF. At 310 to 570 the chain is on the extracellular side; that stretch reads NRYAVSEFLL…RKSINNATLV (261 aa). A BRICHOS domain is found at 369–461; the sequence is TAVDFNTGYV…IDDCEGAQWY (93 aa). A disulfide bridge links cysteine 395 with cysteine 455.

The protein resides in the membrane. The protein is BRICHOS domain-containing protein C09F5.1 of Caenorhabditis elegans.